The chain runs to 375 residues: Queuine tRNA-ribosyltransferase (375 aa).

Asp-89 functions as the Proton acceptor in the catalytic mechanism. Substrate is bound by residues 89-93 (DSGGF), Asp-143, Gln-187, and Gly-214. The interval 245–251 (GVGKPED) is RNA binding. Asp-264 (nucleophile) is an active-site residue. The RNA binding; important for wobble base 34 recognition stretch occupies residues 269 to 273 (TRNAR). Positions 302, 304, 307, and 333 each coordinate Zn(2+).

This sequence belongs to the queuine tRNA-ribosyltransferase family. As to quaternary structure, homodimer. Within each dimer, one monomer is responsible for RNA recognition and catalysis, while the other monomer binds to the replacement base PreQ1. It depends on Zn(2+) as a cofactor.

It catalyses the reaction 7-aminomethyl-7-carbaguanine + guanosine(34) in tRNA = 7-aminomethyl-7-carbaguanosine(34) in tRNA + guanine. It functions in the pathway tRNA modification; tRNA-queuosine biosynthesis. Catalyzes the base-exchange of a guanine (G) residue with the queuine precursor 7-aminomethyl-7-deazaguanine (PreQ1) at position 34 (anticodon wobble position) in tRNAs with GU(N) anticodons (tRNA-Asp, -Asn, -His and -Tyr). Catalysis occurs through a double-displacement mechanism. The nucleophile active site attacks the C1' of nucleotide 34 to detach the guanine base from the RNA, forming a covalent enzyme-RNA intermediate. The proton acceptor active site deprotonates the incoming PreQ1, allowing a nucleophilic attack on the C1' of the ribose to form the product. After dissociation, two additional enzymatic reactions on the tRNA convert PreQ1 to queuine (Q), resulting in the hypermodified nucleoside queuosine (7-(((4,5-cis-dihydroxy-2-cyclopenten-1-yl)amino)methyl)-7-deazaguanosine). This chain is Queuine tRNA-ribosyltransferase, found in Salmonella paratyphi A (strain ATCC 9150 / SARB42).